A 692-amino-acid chain; its full sequence is DNA topoisomerase 4 subunit B (692 aa).

Residues Y53, N93, D120, 162 to 168, and K393 contribute to the ATP site; that span reads GLHGVGI. Positions 473 to 587 constitute a Toprim domain; that stretch reads AELFIVEGDS…AGHLYLAVPP (115 aa). 3 residues coordinate Mg(2+): E479, D552, and D554.

It belongs to the type II topoisomerase family. ParE type 1 subfamily. In terms of assembly, heterotetramer composed of ParC and ParE. It depends on Mg(2+) as a cofactor. The cofactor is Mn(2+). Ca(2+) is required as a cofactor.

It carries out the reaction ATP-dependent breakage, passage and rejoining of double-stranded DNA.. Its function is as follows. Topoisomerase IV is essential for chromosome segregation. It relaxes supercoiled DNA. Performs the decatenation events required during the replication of a circular DNA molecule. The polypeptide is DNA topoisomerase 4 subunit B (Bartonella bacilliformis (strain ATCC 35685 / KC583 / Herrer 020/F12,63)).